The primary structure comprises 447 residues: N-succinylarginine dihydrolase (447 aa).

Residues 19–28 (AGLSFGNEAS), Asn110, and 137–138 (HR) each bind substrate. Residue Glu174 is part of the active site. Residue Arg212 participates in substrate binding. His248 is a catalytic residue. Substrate-binding residues include Asp250 and Asn359. The Nucleophile role is filled by Cys365.

The protein belongs to the succinylarginine dihydrolase family. In terms of assembly, homodimer.

It catalyses the reaction N(2)-succinyl-L-arginine + 2 H2O + 2 H(+) = N(2)-succinyl-L-ornithine + 2 NH4(+) + CO2. Its pathway is amino-acid degradation; L-arginine degradation via AST pathway; L-glutamate and succinate from L-arginine: step 2/5. In terms of biological role, catalyzes the hydrolysis of N(2)-succinylarginine into N(2)-succinylornithine, ammonia and CO(2). This Escherichia coli O81 (strain ED1a) protein is N-succinylarginine dihydrolase.